Reading from the N-terminus, the 326-residue chain is Vitamin B12 import system permease protein BtuC (326 aa).

9 consecutive transmembrane segments (helical) span residues 15–35, 61–81, 88–108, 112–132, 146–166, 184–204, 240–260, 274–294, and 302–322; these read WLLC…CAGE, LAVL…QALF, PGLL…VLLG, LPNW…TLIL, LLAG…AIYF, GGVD…LLWI, GWMV…GLVI, VLLP…DVVA, and ELPI…WLLL.

Belongs to the binding-protein-dependent transport system permease family. FecCD subfamily. As to quaternary structure, the complex is composed of two ATP-binding proteins (BtuD), two transmembrane proteins (BtuC) and a solute-binding protein (BtuF).

It localises to the cell inner membrane. In terms of biological role, part of the ABC transporter complex BtuCDF involved in vitamin B12 import. Involved in the translocation of the substrate across the membrane. This chain is Vitamin B12 import system permease protein BtuC, found in Escherichia coli (strain SE11).